The primary structure comprises 69 residues: Light-harvesting polypeptide B-800/860 alpha chain (69 aa).

Over 1-14 (MTNGKIWLVVKPTV) the chain is Cytoplasmic. Residues 15–35 (GLPIGMLFAALLAVLIHGLLF) form a helical membrane-spanning segment. His31 serves as a coordination point for a bacteriochlorophyll. Over 36–69 (VDGRLKSWWSEFPVAKPAVVSVQAAPAPVAAEVK) the chain is Periplasmic.

Belongs to the antenna complex alpha subunit family. In terms of assembly, the core complex is formed by different alpha and beta chains, binding bacteriochlorophyll molecules, and arranged most probably in tetrameric structures disposed around the reaction center. The non-pigmented gamma chains may constitute additional components.

The protein resides in the cell inner membrane. Antenna complexes are light-harvesting systems, which transfer the excitation energy to the reaction centers. This Rhodocyclus tenuis (Rhodospirillum tenue) protein is Light-harvesting polypeptide B-800/860 alpha chain.